The sequence spans 713 residues: MMQESATETISNSSMNQNGMSTLSSQLDAGSRDGRSSGDTSSEVSTVELLHLQQQQALQAARQLLLQQQTSGLKSPKSSDKQRPLQVPVSVAMMTPQVITPQQMQQILQQQVLSPQQLQALLQQQQAVMLQQQQLQEFYKKQQEQLHLQLLQQQQQQQQQQQQQQQQQQQQQQQQQQQQQQQQQQQQQQHPGKQAKEQQQQQQQQQQLAAQQLVFQQQLLQMQQLQQQQHLLSLQRQGLISIPPGQAALPVQSLPQAGLSPAEIQQLWKEVTGVHSMEDNGIKHGGLDLTTNNSSSTTSSTTSKASPPITHHSIVNGQSSVLNARRDSSSHEETGASHTLYGHGVCKWPGCESICEDFGQFLKHLNNEHALDDRSTAQCRVQMQVVQQLEIQLSKERERLQAMMTHLHMRPSEPKPSPKPLNLVSSVTMSKNMLETSPQSLPQTPTTPTAPVTPITQGPSVITPASVPNVGAIRRRHSDKYNIPMSSEIAPNYEFYKNADVRPPFTYATLIRQAIMESSDRQLTLNEIYSWFTRTFAYFRRNAATWKNAVRHNLSLHKCFVRVENVKGAVWTVDEVEYQKRRSQKITGSPTLVKNIPTSLGYGAALNASLQAALAESSLPLLSNPGLINNASSGLLQAVHEDLNGSLDHIDSNGNSSPGCSPQPHIHSIHVKEEPVIAEDEDCPMSLVTTANHSPELEDDREIEEEPLSEDLE.

Positions 1–28 (MMQESATETISNSSMNQNGMSTLSSQLD) are enriched in polar residues. Disordered regions lie at residues 1–44 (MMQE…SSEV) and 283–337 (KHGG…TGAS). Positions 290–303 (TTNNSSSTTSSTTS) are enriched in low complexity. The segment covering 313 to 322 (SIVNGQSSVL) has biased composition (polar residues). Residues 324-335 (ARRDSSSHEETG) show a composition bias toward basic and acidic residues. A C2H2-type zinc finger spans residues 344-369 (GVCKWPGCESICEDFGQFLKHLNNEH). A leucine-zipper region spans residues 386-407 (VQQLEIQLSKERERLQAMMTHL). Residues 420–424 (PLNLV) are CTBP1-binding. Residues 436-457 (TSPQSLPQTPTTPTAPVTPITQ) show a composition bias toward low complexity. Positions 436–463 (TSPQSLPQTPTTPTAPVTPITQGPSVIT) are disordered. Residues 502–592 (RPPFTYATLI…SQKITGSPTL (91 aa)) constitute a DNA-binding region (fork-head). Disordered regions lie at residues 647–666 (LDHIDSNGNSSPGCSPQPHI) and 676–713 (VIAEDEDCPMSLVTTANHSPELEDDREIEEEPLSEDLE). Positions 697-713 (LEDDREIEEEPLSEDLE) are enriched in acidic residues.

As to quaternary structure, forms homodimers and heterodimers with FOXP1 and FOXP4. Dimerization is required for DNA-binding. Interacts with CTBP1. Interacts with FOXP1. Interacts with TBR1. Interacts with ZMYM2.

The protein resides in the nucleus. In terms of biological role, transcriptional repressor that may play a role in the specification and differentiation of lung epithelium. May also play a role in developing neural, gastrointestinal and cardiovascular tissues. Can act with CTBP1 to synergistically repress transcription but CTPBP1 is not essential. Plays a role in synapse formation by regulating SRPX2 levels. The polypeptide is Forkhead box protein P2 (FOXP2) (Gorilla gorilla gorilla (Western lowland gorilla)).